The sequence spans 304 residues: UDP-3-O-acyl-N-acetylglucosamine deacetylase (304 aa).

H77, H233, and D237 together coordinate Zn(2+). H260 (proton donor) is an active-site residue.

It belongs to the LpxC family. The cofactor is Zn(2+).

It carries out the reaction a UDP-3-O-[(3R)-3-hydroxyacyl]-N-acetyl-alpha-D-glucosamine + H2O = a UDP-3-O-[(3R)-3-hydroxyacyl]-alpha-D-glucosamine + acetate. It participates in glycolipid biosynthesis; lipid IV(A) biosynthesis; lipid IV(A) from (3R)-3-hydroxytetradecanoyl-[acyl-carrier-protein] and UDP-N-acetyl-alpha-D-glucosamine: step 2/6. Functionally, catalyzes the hydrolysis of UDP-3-O-myristoyl-N-acetylglucosamine to form UDP-3-O-myristoylglucosamine and acetate, the committed step in lipid A biosynthesis. The polypeptide is UDP-3-O-acyl-N-acetylglucosamine deacetylase (Lawsonia intracellularis (strain PHE/MN1-00)).